The primary structure comprises 134 residues: Small ribosomal subunit protein uS9c (134 aa).

Positions aspartate 105–alanine 114 are enriched in basic and acidic residues. A disordered region spans residues aspartate 105–arginine 134. A compositionally biased stretch (basic residues) spans lysine 115–arginine 134.

It belongs to the universal ribosomal protein uS9 family.

It is found in the plastid. It localises to the cyanelle. This chain is Small ribosomal subunit protein uS9c (rps9), found in Cyanophora paradoxa.